Reading from the N-terminus, the 294-residue chain is Antiviral protein alpha (294 aa).

Positions 1–24 (MKMMVVVVVMMLSWLILKPPSTWA) are cleaved as a signal peptide. 2 disulfide bridges follow: C58–C282 and C108–C130. E199 is an active-site residue. Residues 286-294 (YQSAMFPHL) constitute a propeptide that is removed on maturation.

It belongs to the ribosome-inactivating protein family. Type 1 RIP subfamily. Monomer.

Its subcellular location is the secreted. The protein localises to the cell wall. The catalysed reaction is Endohydrolysis of the N-glycosidic bond at one specific adenosine on the 28S rRNA.. Functionally, inhibits viral infection of plants, and protein synthesis in vitro. Has also been shown to inhibit the replication of mammalian viruses. The protein may provide a means of cellular suicide upon invasion by a virus. The protein is Antiviral protein alpha of Phytolacca americana (American pokeweed).